The sequence spans 154 residues: Egg-lysin (154 aa).

Residues 1-18 (MKLLVLCIFAMMATLAMS) form the signal peptide.

As to quaternary structure, homodimer. Sperm.

Dissolves the egg vitelline layer nonenzymatically during fertilization. It creates a hole of about 3 mu-m in diameter through which the sperm pass. The protein is Egg-lysin of Haliotis walallensis (Flat abalone).